A 514-amino-acid chain; its full sequence is Lysine--tRNA ligase (514 aa).

2 residues coordinate Mg(2+): E422 and E429.

The protein belongs to the class-II aminoacyl-tRNA synthetase family. In terms of assembly, homodimer. It depends on Mg(2+) as a cofactor.

It localises to the cytoplasm. It carries out the reaction tRNA(Lys) + L-lysine + ATP = L-lysyl-tRNA(Lys) + AMP + diphosphate. The sequence is that of Lysine--tRNA ligase from Psychrobacter arcticus (strain DSM 17307 / VKM B-2377 / 273-4).